Consider the following 536-residue polypeptide: Velvet complex subunit B (536 aa).

A compositionally biased stretch (polar residues) spans 1–26 (MIQRTTDPAAGSSTSGPPTNSLSWGS). Disordered stretches follow at residues 1–27 (MIQRTTDPAAGSSTSGPPTNSLSWGSR), 106–143 (PNAAQDRGPPMPAKPRRPTNPPPPSNTHGSPPAPAIPF), 157–409 (SAPA…RTLV), and 508–536 (KLPLRNRHGSGSKRRRRGAGGGSDDEESD). Positions 25–512 (GSRHNGKLYT…NQQNMKLPLR (488 aa)) constitute a Velvet domain. Residues 114 to 143 (PPMPAKPRRPTNPPPPSNTHGSPPAPAIPF) are compositionally biased toward pro residues. Low complexity-rich tracts occupy residues 158–170 (APASDRSPSSASA) and 190–265 (PYGP…YPPY). Polar residues predominate over residues 280-305 (TSNFDHSQPVTSSVDQETNSPVVTTT). Residues 306 to 315 (ARDDDQREGE) show a composition bias toward basic and acidic residues. Residues 328–342 (PSNSGAPSTSPTAST) are compositionally biased toward low complexity. Over residues 356–399 (EEREGPDGGPDLREPIEPGSTKAREEEDARTGTEKGDPKDKSDA) the composition is skewed to basic and acidic residues. The segment covering 400 to 409 (QRATYTRTLV) has biased composition (polar residues). A compositionally biased stretch (basic residues) spans 511 to 525 (LRNRHGSGSKRRRRG).

This sequence belongs to the velvet family. VelB subfamily. Component of the heterotrimeric velvet complex composed of laeA, veA and velB; VeA acting as a bridging protein between laeA and velB. Forms a heterodimeric complex with vosA; the formation of the velB-vosA complex is light-dependent.

The protein localises to the nucleus. Its subcellular location is the cytoplasm. Its function is as follows. Component of the velvet transcription factor complex that controls sexual/asexual developmental ratio in response to light, promoting sexual development in the darkness while stimulating asexual sporulation under illumination. The velvet complex acts as a global regulator for secondary metabolite gene expression. Component of the velB-VosA heterodimeric complex that plays a dual role in activating genes associated with spore maturation and repressing certain development-associated genes. The velB-VosA complex binds DNA through the DNA-binding domain of vosA that recognizes an 11-nucleotide consensus sequence 5'-CTGGCCGCGGC-3' consisting of two motifs in the promoters of key developmental regulatory genes. In Schizophyllum commune (strain H4-8 / FGSC 9210) (Split gill fungus), this protein is Velvet complex subunit B.